The following is a 369-amino-acid chain: Anhydro-N-acetylmuramic acid kinase (369 aa).

ATP is bound at residue 12-19 (GTSLDGVD).

It belongs to the anhydro-N-acetylmuramic acid kinase family.

It catalyses the reaction 1,6-anhydro-N-acetyl-beta-muramate + ATP + H2O = N-acetyl-D-muramate 6-phosphate + ADP + H(+). It functions in the pathway amino-sugar metabolism; 1,6-anhydro-N-acetylmuramate degradation. The protein operates within cell wall biogenesis; peptidoglycan recycling. Functionally, catalyzes the specific phosphorylation of 1,6-anhydro-N-acetylmuramic acid (anhMurNAc) with the simultaneous cleavage of the 1,6-anhydro ring, generating MurNAc-6-P. Is required for the utilization of anhMurNAc either imported from the medium or derived from its own cell wall murein, and thus plays a role in cell wall recycling. This chain is Anhydro-N-acetylmuramic acid kinase, found in Escherichia coli O7:K1 (strain IAI39 / ExPEC).